Reading from the N-terminus, the 243-residue chain is Type II restriction enzyme NlaIV (243 aa).

It catalyses the reaction Endonucleolytic cleavage of DNA to give specific double-stranded fragments with terminal 5'-phosphates.. Its function is as follows. A P subtype restriction enzyme that recognizes the double-stranded sequence 5'-GGNNCC-3' and cleaves after N-3. The chain is Type II restriction enzyme NlaIV (nlaIVR) from Neisseria lactamica.